Reading from the N-terminus, the 149-residue chain is Large ribosomal subunit protein bL9 (149 aa).

This sequence belongs to the bacterial ribosomal protein bL9 family.

Binds to the 23S rRNA. In Leptospira interrogans serogroup Icterohaemorrhagiae serovar copenhageni (strain Fiocruz L1-130), this protein is Large ribosomal subunit protein bL9.